The following is a 558-amino-acid chain: MSLEVTRATAGMVLELYVSDREGSDATGDGTKEKPFKTGLKALMTVGKEPFPTIYVDSQKENERWNVISKSQLKNIKKMWHREQMKSESREKKEAEDSLRREKNLEEAKKITIKNDPALPEPKCVKISALEGYRGQRVKVFGWVHRLRRQGKNLMFLVLRDGTGYLQCVLADELCQCYNGVLLSTESSVAVYGMLNLTPKGKQAPGGHELSCDFWELIGLAPAGGADNLINEESDVDVQLNNRHMMIRGENMSKILKARSMITRCFRDHFFDRGYHEITPPSLVQTQVEGGATLFKLNYFGEEAFLTQSSQLYLETCLPALGDVFCIAQSYRAEQSRTRRHLAEYTHVEAECPLLTFDDLLNRLEDLVCDVVDRILKSPAGSIVYELNPNFQPPKRPFKRMNYSDAIIWLKEHDIKKEDGTFYEFGEDIPEAPERLMTDTINEPILLCRFPVEIKSFYMQRCPEDSCLTESVDVLMPNVGEIVGGSMRTSDAEEILAGYKREGIDPAPYYWYTDQRKYGTCPHGGYGLGLERFLTWILNRYHIRDVCLYPRFVQRCTP.

A Phosphoserine modification is found at Ser-71. Residues 79 to 101 are disordered; that stretch reads MWHREQMKSESREKKEAEDSLRR. The span at 81 to 101 shows a compositional bias: basic and acidic residues; it reads HREQMKSESREKKEAEDSLRR. 2 positions are modified to N6-acetyllysine: Lys-254 and Lys-500.

This sequence belongs to the class-II aminoacyl-tRNA synthetase family. As to quaternary structure, homodimer.

The protein resides in the cytoplasm. The enzyme catalyses tRNA(Asn) + L-asparagine + ATP = L-asparaginyl-tRNA(Asn) + AMP + diphosphate + H(+). Its function is as follows. Catalyzes the attachment of asparagine to tRNA(Asn) in a two-step reaction: asparagine is first activated by ATP to form Asn-AMP and then transferred to the acceptor end of tRNA(Asn). In addition to its essential role in protein synthesis, acts as a signaling molecule that induced migration of CCR3-expressing cells. Has an essential role in the development of the cerebral cortex, being required for proper proliferation of radial glial cells. In Macaca fascicularis (Crab-eating macaque), this protein is Asparagine--tRNA ligase, cytoplasmic.